The following is a 736-amino-acid chain: Polyribonucleotide nucleotidyltransferase (736 aa).

2 residues coordinate Mg(2+): aspartate 506 and aspartate 512. A KH domain is found at 573–632; the sequence is PRLTTIQVPVDAIGLIIGKGGETIRSITEETGAEINIEDDGTVTIACSSVEGTHAALATI. The S1 motif domain maps to 642–717; that stretch reads GTIYLGKVRD…GKTRFALSMR (76 aa).

The protein belongs to the polyribonucleotide nucleotidyltransferase family. It depends on Mg(2+) as a cofactor.

The protein resides in the cytoplasm. It catalyses the reaction RNA(n+1) + phosphate = RNA(n) + a ribonucleoside 5'-diphosphate. Involved in mRNA degradation. Catalyzes the phosphorolysis of single-stranded polyribonucleotides processively in the 3'- to 5'-direction. This Chlorobium limicola (strain DSM 245 / NBRC 103803 / 6330) protein is Polyribonucleotide nucleotidyltransferase.